The chain runs to 99 residues: Cell cycle protein GpsB (99 aa).

A coiled-coil region spans residues L34–V71.

It belongs to the GpsB family. In terms of assembly, forms polymers through the coiled coil domains. Interacts with PBP1, MreC and EzrA.

Its subcellular location is the cytoplasm. In terms of biological role, divisome component that associates with the complex late in its assembly, after the Z-ring is formed, and is dependent on DivIC and PBP2B for its recruitment to the divisome. Together with EzrA, is a key component of the system that regulates PBP1 localization during cell cycle progression. Its main role could be the removal of PBP1 from the cell pole after pole maturation is completed. Also contributes to the recruitment of PBP1 to the division complex. Not essential for septum formation. This chain is Cell cycle protein GpsB, found in Bacillus velezensis (strain DSM 23117 / BGSC 10A6 / LMG 26770 / FZB42) (Bacillus amyloliquefaciens subsp. plantarum).